The following is a 390-amino-acid chain: NADH-quinone oxidoreductase subunit H (390 aa).

9 helical membrane-spanning segments follow: residues Trp4–Thr24, Leu78–Ile98, Val120–Ala140, Met157–Ser177, Gly191–Glu211, Tyr247–Arg266, Ile278–Ile298, Phe315–Phe337, and Trp341–Leu360.

It belongs to the complex I subunit 1 family. In terms of assembly, NDH-1 is composed of 15 different subunits. Subunits NuoA, H, J, K, L, M, N constitute the membrane sector of the complex.

The protein localises to the cell membrane. It carries out the reaction a quinone + NADH + 5 H(+)(in) = a quinol + NAD(+) + 4 H(+)(out). Its function is as follows. NDH-1 shuttles electrons from NADH, via FMN and iron-sulfur (Fe-S) centers, to quinones in the respiratory chain. The immediate electron acceptor for the enzyme in this species is believed to be ubiquinone. Couples the redox reaction to proton translocation (for every two electrons transferred, four hydrogen ions are translocated across the cytoplasmic membrane), and thus conserves the redox energy in a proton gradient. This subunit may bind ubiquinone. The protein is NADH-quinone oxidoreductase subunit H of Deinococcus deserti (strain DSM 17065 / CIP 109153 / LMG 22923 / VCD115).